The primary structure comprises 100 residues: Large ribosomal subunit protein uL23 (100 aa).

It belongs to the universal ribosomal protein uL23 family. In terms of assembly, part of the 50S ribosomal subunit. Contacts protein L29, and trigger factor when it is bound to the ribosome.

In terms of biological role, one of the early assembly proteins it binds 23S rRNA. One of the proteins that surrounds the polypeptide exit tunnel on the outside of the ribosome. Forms the main docking site for trigger factor binding to the ribosome. The protein is Large ribosomal subunit protein uL23 of Photorhabdus laumondii subsp. laumondii (strain DSM 15139 / CIP 105565 / TT01) (Photorhabdus luminescens subsp. laumondii).